A 93-amino-acid chain; its full sequence is Large ribosomal subunit protein uL23cz/uL23cy (93 aa).

Belongs to the universal ribosomal protein uL23 family. Part of the 50S ribosomal subunit.

It is found in the plastid. It localises to the chloroplast. Its function is as follows. Binds to 23S rRNA. The polypeptide is Large ribosomal subunit protein uL23cz/uL23cy (rpl23-A) (Acorus calamus (Sweet flag)).